We begin with the raw amino-acid sequence, 781 residues long: Mitogen-activated protein kinase 7 (781 aa).

Positions 1–27 (MAEPLKEDDGEDGSGEPPGPVKAEPAG) are disordered. Ala-2 bears the N-acetylalanine mark. Residues 2–77 (AEPLKEDDGE…VVSSARRRLT (76 aa)) are required for cytoplasmic targeting. Residues 55–347 (YEIIETIGNG…AAAALRHPFL (293 aa)) form the Protein kinase domain. ATP-binding positions include 61 to 69 (IGNGAYGVV) and Lys-84. Residues 78-139 (GQQVAIKKIP…FKSVYVVLDL (62 aa)) are required for binding to MAP2K5. The tract at residues 140–406 (MESDLHQIIH…QQIRFQPSLQ (267 aa)) is necessary for oligomerization. Asp-182 (proton acceptor) is an active-site residue. The TXY motif lies at 219-221 (TEY). The disordered stretch occupies residues 402-708 (QPSLQPVASE…PKGSGAGYGV (307 aa)). Positions 407–781 (PVASEPGCPD…LADLPDLQEP (375 aa)) are may not be required for kinase activity; required to stimulate MEF2C activity. Pro residues-rich tracts occupy residues 433–445 (SPPP…PGPA) and 454–463 (QPPPPASEPA). A compositionally biased stretch (low complexity) spans 476 to 486 (KAALKAALLKS). Composition is skewed to basic and acidic residues over residues 502–519 (PEPR…EREE), 527–544 (RAKE…KERG), and 563–573 (DNDRSLLERWT). Residues 505–539 (RKPVTAQERQREREEKRRRRQERAKEREKRRQERE) carry the Nuclear localization signal motif. 2 stretches are compositionally biased toward pro residues: residues 578 to 594 (PPAP…PPAG) and 601 to 614 (GPLP…PAPA). 2 stretches are compositionally biased toward low complexity: residues 615–632 (AGPA…LAPQ) and 642–652 (GPSALSVLPYF). Residues 653-664 (PSGPPPPDPGGA) show a composition bias toward pro residues. Polar residues predominate over residues 668–685 (STSESPDVTLVTQQLSKS). At Ser-685 the chain carries Phosphoserine. The residue at position 698 (Thr-698) is a Phosphothreonine.

The protein belongs to the protein kinase superfamily. CMGC Ser/Thr protein kinase family. MAP kinase subfamily. As to quaternary structure, interacts with MAP2K5. Forms oligomers. Interacts with MEF2A, MEF2C and MEF2D; the interaction phosphorylates the MEF2s and enhances transcriptional activity of MEF2A, MEF2C but not MEF2D. Interacts with SGK1. Interacts with PML. Interacts (via N-terminal half) with HSP90AB1-CDC37 chaperone complex in resting cells; the interaction is MAP2K5-independent and prevents MAPK7 from ubiquitination and proteasomal degradation. Interacts with STUB1/CHIP; the interaction is enhanced in the presence of IGF1 or MAP2K5 and promotes STUB1/CHIP E3 ligase activity. Mg(2+) is required as a cofactor. Dually phosphorylated on Thr-219 and Tyr-221, which activates the enzyme.

The protein resides in the cytoplasm. Its subcellular location is the nucleus. The protein localises to the PML body. The catalysed reaction is L-seryl-[protein] + ATP = O-phospho-L-seryl-[protein] + ADP + H(+). The enzyme catalyses L-threonyl-[protein] + ATP = O-phospho-L-threonyl-[protein] + ADP + H(+). With respect to regulation, activated by tyrosine and threonine phosphorylation. Activated in response to hyperosmolarity, hydrogen peroxide, and epidermal growth factor (EGF). In terms of biological role, plays a role in various cellular processes such as proliferation, differentiation and cell survival. The upstream activator of MAPK7 is the MAPK kinase MAP2K5. Upon activation, it translocates to the nucleus and phosphorylates various downstream targets including MEF2C. EGF activates MAPK7 through a Ras-independent and MAP2K5-dependent pathway. As part of the MAPK/ERK signaling pathway, acts as a negative regulator of apoptosis in cardiomyocytes via interaction with STUB1/CHIP and promotion of STUB1-mediated ubiquitination and degradation of ICER-type isoforms of CREM. May have a role in muscle cell differentiation. May be important for endothelial function and maintenance of blood vessel integrity. MAP2K5 and MAPK7 interact specifically with one another and not with MEK1/ERK1 or MEK2/ERK2 pathways. Phosphorylates SGK1 at Ser-78 and this is required for growth factor-induced cell cycle progression. Involved in the regulation of p53/TP53 by disrupting the PML-MDM2 interaction. The protein is Mitogen-activated protein kinase 7 (MAPK7) of Bos taurus (Bovine).